The following is a 500-amino-acid chain: L-arabinose isomerase (500 aa).

4 residues coordinate Mn(2+): glutamate 306, glutamate 333, histidine 350, and histidine 450.

Belongs to the arabinose isomerase family. In terms of assembly, homohexamer. Mn(2+) serves as cofactor.

It carries out the reaction beta-L-arabinopyranose = L-ribulose. The protein operates within carbohydrate degradation; L-arabinose degradation via L-ribulose; D-xylulose 5-phosphate from L-arabinose (bacterial route): step 1/3. Functionally, catalyzes the conversion of L-arabinose to L-ribulose. The sequence is that of L-arabinose isomerase from Shigella flexneri.